The following is a 111-amino-acid chain: Resistin-like alpha (111 aa).

Residues 1 to 23 form the signal peptide; sequence MKTATCSLLICVFLLQLMVPVNT. 5 cysteine pairs are disulfide-bonded: Cys-55–Cys-108, Cys-67–Cys-107, Cys-76–Cys-93, Cys-78–Cys-95, and Cys-82–Cys-97.

This sequence belongs to the resistin/FIZZ family. As to quaternary structure, monomer. In terms of tissue distribution, highest levels in adipose tissue.

The protein localises to the secreted. Its function is as follows. Probable hormone. Plays a role in pulmonary vascular remodeling. This is Resistin-like alpha (Retnla) from Rattus norvegicus (Rat).